The following is a 118-amino-acid chain: Large ribosomal subunit protein eL18 (118 aa).

It belongs to the eukaryotic ribosomal protein eL18 family.

The protein is Large ribosomal subunit protein eL18 of Sulfurisphaera tokodaii (strain DSM 16993 / JCM 10545 / NBRC 100140 / 7) (Sulfolobus tokodaii).